The sequence spans 1348 residues: Phosphoribosylformylglycinamidine synthase (1348 aa).

ATP-binding positions include 300 to 311 and alanine 701; that span reads GAATGAGGEIRD. Aspartate 702, glutamate 741, asparagine 745, and aspartate 941 together coordinate Mg(2+). Serine 943 is a binding site for ATP. The 250-residue stretch at 1099–1348 folds into the Glutamine amidotransferase type-1 domain; sequence VAILREQGVN…MFRNARVWCG (250 aa). Residue cysteine 1192 is the Nucleophile of the active site. Residues histidine 1313 and glutamate 1315 contribute to the active site.

It in the N-terminal section; belongs to the FGAMS family. In terms of assembly, monomer.

The protein localises to the cytoplasm. It catalyses the reaction N(2)-formyl-N(1)-(5-phospho-beta-D-ribosyl)glycinamide + L-glutamine + ATP + H2O = 2-formamido-N(1)-(5-O-phospho-beta-D-ribosyl)acetamidine + L-glutamate + ADP + phosphate + H(+). It functions in the pathway purine metabolism; IMP biosynthesis via de novo pathway; 5-amino-1-(5-phospho-D-ribosyl)imidazole from N(2)-formyl-N(1)-(5-phospho-D-ribosyl)glycinamide: step 1/2. Its function is as follows. Phosphoribosylformylglycinamidine synthase involved in the purines biosynthetic pathway. Catalyzes the ATP-dependent conversion of formylglycinamide ribonucleotide (FGAR) and glutamine to yield formylglycinamidine ribonucleotide (FGAM) and glutamate. This Xanthomonas campestris pv. campestris (strain ATCC 33913 / DSM 3586 / NCPPB 528 / LMG 568 / P 25) protein is Phosphoribosylformylglycinamidine synthase.